The following is a 166-amino-acid chain: MPSDNFIDKAFSAMSDVVMKVIPTDQKSKDAFKYYRSGMAAQVDGNYAKALGNYTEALALEEDPFDKSYILYNMGLIFANNGDHEKALDYYHQSLELNPNLVQALYNTGVILHYKGEQAEEAAELDEAERFFDLAADFWKRAIKIAPNNYSEVQNWLKTTGRVGVG.

TPR repeat units lie at residues 31 to 64 (AFKY…EEDP), 68 to 101 (SYIL…NPNL), and 116 to 149 (GEQA…APNN).

This sequence belongs to the Ycf3 family.

The protein resides in the cellular thylakoid membrane. Functionally, essential for the assembly of the photosystem I (PSI) complex. May act as a chaperone-like factor to guide the assembly of the PSI subunits. The chain is Photosystem I assembly protein Ycf3 from Acaryochloris marina (strain MBIC 11017).